The following is a 1129-amino-acid chain: Phytochrome A type 4 (1129 aa).

Residues 1 to 21 are compositionally biased toward low complexity; the sequence is MSSSRPASSSSSRNRQSSRAR. Residues 1 to 24 form a disordered region; it reads MSSSRPASSSSSRNRQSSRARVLA. One can recognise a GAF domain in the interval 217–402; the sequence is SMEVLCNTVV…VFAVHVNREF (186 aa). C322 contributes to the phytochromobilin binding site. PAS domains are found at residues 618–688 and 748–822; these read VTSE…LQGK and VEGD…VSLC. The Histidine kinase domain maps to 902-1122; sequence YMRHAINNPL…TFILTAELAS (221 aa).

This sequence belongs to the phytochrome family. Homodimer. In terms of processing, contains one covalently linked phytochromobilin chromophore.

Its function is as follows. Regulatory photoreceptor which exists in two forms that are reversibly interconvertible by light: the Pr form that absorbs maximally in the red region of the spectrum and the Pfr form that absorbs maximally in the far-red region. Photoconversion of Pr to Pfr induces an array of morphogenic responses, whereas reconversion of Pfr to Pr cancels the induction of those responses. Pfr controls the expression of a number of nuclear genes including those encoding the small subunit of ribulose-bisphosphate carboxylase, chlorophyll A/B binding protein, protochlorophyllide reductase, rRNA, etc. It also controls the expression of its own gene(s) in a negative feedback fashion. The protein is Phytochrome A type 4 (PHYA4) of Avena sativa (Oat).